The primary structure comprises 188 residues: MTVGVLSLQGSFYEHLSILSRLNTDHIQVKTSEDLSRVTRLIIPGGESTAMLALTQKSGLFDLVRDRIMSGMPVYGTCAGMIMLSTFVEDFPNQKTLSCLDIAVRRNAFGRQINSFESEVSFLNSKITVPFIRAPKITQIGEGVDVLSRLESGDIVAVRQGNVMATAFHPELTGGAAVHEYFLHLGLE.

46–48 is a binding site for L-glutamine; the sequence is GES. Catalysis depends on Cys78, which acts as the Nucleophile. Residues Arg106 and 132 to 133 contribute to the L-glutamine site; that span reads IR. Residues His169 and Glu171 each act as charge relay system in the active site.

The protein belongs to the glutaminase PdxT/SNO family. In the presence of PdxS, forms a dodecamer of heterodimers. Only shows activity in the heterodimer.

The enzyme catalyses aldehydo-D-ribose 5-phosphate + D-glyceraldehyde 3-phosphate + L-glutamine = pyridoxal 5'-phosphate + L-glutamate + phosphate + 3 H2O + H(+). The catalysed reaction is L-glutamine + H2O = L-glutamate + NH4(+). Its pathway is cofactor biosynthesis; pyridoxal 5'-phosphate biosynthesis. Catalyzes the hydrolysis of glutamine to glutamate and ammonia as part of the biosynthesis of pyridoxal 5'-phosphate. The resulting ammonia molecule is channeled to the active site of PdxS. The sequence is that of Pyridoxal 5'-phosphate synthase subunit PdxT from Tropheryma whipplei (strain TW08/27) (Whipple's bacillus).